We begin with the raw amino-acid sequence, 941 residues long: Zinc finger protein su(Hw) (941 aa).

Disordered stretches follow at residues 1–97 (MSAS…APAA) and 176–211 (ENNN…NSSQ). Low complexity predominate over residues 47 to 57 (STTTTTSRTPS). Residues 185-202 (VTEDDEDLGEDGDEDGED) show a composition bias toward acidic residues. A Phosphothreonine modification is found at Thr-186. Residues 220–242 (HVCGKCYKTFRRVQSLKKHLEFC) form a C2H2-type 1; atypical zinc finger. The C2H2-type 2 zinc finger occupies 290-313 (INCPDCPKSFKTQTSYERHIFITH). The C2H2-type 3; atypical zinc finger occupies 319-341 (FPCSICNANLRSEALLALHEEQH). C2H2-type zinc fingers lie at residues 348–366 (YACK…LKRH), 380–402 (MSCK…LKQH), 413–435 (YMCH…IRTH), 441–463 (FDCD…RRYH), 469–491 (YSCT…MKRH), 497–519 (HKCD…SKTH), 523–545 (FPCE…VKTH), 553–577 (FSCA…EGKH), and 596–619 (TDCA…RTVH). An interaction with mod(mdg4) region spans residues 760–860 (ILTEEDIKLK…PIDDVIEYVL (101 aa)). The segment at 864-941 (DQDEGGLDKD…KKPVGEQEKA (78 aa)) is disordered. 2 stretches are compositionally biased toward basic and acidic residues: residues 869-880 (GLDKDNESHSGD) and 891-941 (KTNE…QEKA).

Component of the gypsy chromatin insulator complex, composed of Cp190, mod(mdg4) and su(Hw). The gypsy chromatin insulator complex interacts with Topors via mod(mdg4) and su(Hw). Upon ecdysone stimulation, interacts with Nup98.

The protein localises to the nucleus. Its subcellular location is the chromosome. Functionally, component of the gypsy chromatin insulator complex which is required for the function of the gypsy chromatin insulator and other endogenous chromatin insulators. Chromatin insulators are regulatory elements which establish independent domains of transcriptional activity within eukaryotic genomes. Insulators have two defining properties; they can block the communication between an enhancer and a promoter when placed between them and can also buffer transgenes from position effect variegation (PEV). Insulators are proposed to structure the chromatin fiber into independent domains of differing transcriptional potential by promoting the formation of distinct chromatin loops. This chromatin looping may involve the formation of insulator bodies, where homotypic interactions between individual subunits of the insulator complex could promote the clustering of widely spaced insulators at the nuclear periphery. Within the gypsy insulator complex, this protein binds specifically to a region of the gypsy element located 3' of the 5' long terminal repeat (LTR), and may also mediate interaction with other endogenous insulators at sites distinct from those recognized by Cp190. Cooperates with pita and cliff to recruit Cp190 and regulate insulator function at the front-ultraabdominal (Fub) boundary. In Drosophila melanogaster (Fruit fly), this protein is Zinc finger protein su(Hw).